The following is a 179-amino-acid chain: Large ribosomal subunit protein uL6c (179 aa).

It belongs to the universal ribosomal protein uL6 family. As to quaternary structure, part of the 50S ribosomal subunit.

The protein localises to the plastid. It is found in the chloroplast. Binds 23S rRNA. The protein is Large ribosomal subunit protein uL6c (rpl6) of Trieres chinensis (Marine centric diatom).